Reading from the N-terminus, the 163-residue chain is Putative 4-hydroxy-4-methyl-2-oxoglutarate aldolase (163 aa).

Substrate contacts are provided by residues 75–78 and Arg97; that span reads GDQL. Residue Asp98 participates in a divalent metal cation binding.

It belongs to the class II aldolase/RraA-like family. As to quaternary structure, homotrimer. It depends on a divalent metal cation as a cofactor.

The catalysed reaction is 4-hydroxy-4-methyl-2-oxoglutarate = 2 pyruvate. It catalyses the reaction oxaloacetate + H(+) = pyruvate + CO2. In terms of biological role, catalyzes the aldol cleavage of 4-hydroxy-4-methyl-2-oxoglutarate (HMG) into 2 molecules of pyruvate. Also contains a secondary oxaloacetate (OAA) decarboxylase activity due to the common pyruvate enolate transition state formed following C-C bond cleavage in the retro-aldol and decarboxylation reactions. The protein is Putative 4-hydroxy-4-methyl-2-oxoglutarate aldolase of Photobacterium profundum (strain SS9).